Reading from the N-terminus, the 77-residue chain is Conotoxin Ar5.1 a (77 aa).

A signal peptide spans 1–19 (MLCLPVFIILLLLASPAAS). A propeptide spanning residues 20-44 (NPLETRIQSDLIRAALEDADMKNEK) is cleaved from the precursor.

The protein belongs to the conotoxin T superfamily. Post-translationally, contains 2 disulfide bonds that can be either 'C1-C3, C2-C4' or 'C1-C4, C2-C3', since these disulfide connectivities have been observed for conotoxins with cysteine framework V (for examples, see AC P0DQQ7 and AC P81755). As to expression, expressed by the venom duct.

Its subcellular location is the secreted. In Conus arenatus (Sand-dusted cone), this protein is Conotoxin Ar5.1 a.